The chain runs to 427 residues: Serine--tRNA ligase (427 aa).

231–233 provides a ligand contact to L-serine; the sequence is TAE. 262-264 lines the ATP pocket; sequence RSE. Glu-285 provides a ligand contact to L-serine. 349-352 lines the ATP pocket; it reads EISS. Ser-385 lines the L-serine pocket.

This sequence belongs to the class-II aminoacyl-tRNA synthetase family. Type-1 seryl-tRNA synthetase subfamily. Homodimer. The tRNA molecule binds across the dimer.

The protein resides in the cytoplasm. It carries out the reaction tRNA(Ser) + L-serine + ATP = L-seryl-tRNA(Ser) + AMP + diphosphate + H(+). The enzyme catalyses tRNA(Sec) + L-serine + ATP = L-seryl-tRNA(Sec) + AMP + diphosphate + H(+). It functions in the pathway aminoacyl-tRNA biosynthesis; selenocysteinyl-tRNA(Sec) biosynthesis; L-seryl-tRNA(Sec) from L-serine and tRNA(Sec): step 1/1. Catalyzes the attachment of serine to tRNA(Ser). Is also able to aminoacylate tRNA(Sec) with serine, to form the misacylated tRNA L-seryl-tRNA(Sec), which will be further converted into selenocysteinyl-tRNA(Sec). The protein is Serine--tRNA ligase of Rhizobium leguminosarum bv. trifolii (strain WSM2304).